A 426-amino-acid polypeptide reads, in one-letter code: 3-phosphoshikimate 1-carboxyvinyltransferase (426 aa).

Positions 22, 23, and 27 each coordinate 3-phosphoshikimate. K22 is a binding site for phosphoenolpyruvate. 2 residues coordinate phosphoenolpyruvate: G96 and R124. Residues S170, S171, Q172, S198, D314, N337, and K341 each coordinate 3-phosphoshikimate. Q172 is a binding site for phosphoenolpyruvate. The Proton acceptor role is filled by D314. Phosphoenolpyruvate is bound by residues R345, R387, and K412.

Belongs to the EPSP synthase family. Monomer.

It localises to the cytoplasm. It carries out the reaction 3-phosphoshikimate + phosphoenolpyruvate = 5-O-(1-carboxyvinyl)-3-phosphoshikimate + phosphate. Its pathway is metabolic intermediate biosynthesis; chorismate biosynthesis; chorismate from D-erythrose 4-phosphate and phosphoenolpyruvate: step 6/7. In terms of biological role, catalyzes the transfer of the enolpyruvyl moiety of phosphoenolpyruvate (PEP) to the 5-hydroxyl of shikimate-3-phosphate (S3P) to produce enolpyruvyl shikimate-3-phosphate and inorganic phosphate. In Shewanella pealeana (strain ATCC 700345 / ANG-SQ1), this protein is 3-phosphoshikimate 1-carboxyvinyltransferase.